The sequence spans 262 residues: Thrombin-like enzyme gyroxin B1.3 (262 aa).

The first 18 residues, 1-18 (MVLIRVLANLLILQLSYA), serve as a signal peptide directing secretion. Residues 19 to 262 (QKSSELVIGG…AGSETVNCPS (244 aa)) constitute a propeptide that is removed on maturation. The region spanning 25–253 (VIGGDECNIN…HLDWIQNIIA (229 aa)) is the Peptidase S1 domain. Cystine bridges form between Cys-31-Cys-165, Cys-52-Cys-68, Cys-102-Cys-260, Cys-144-Cys-214, Cys-176-Cys-193, and Cys-204-Cys-229. His-67 serves as the catalytic Charge relay system. Residue Asn-105 is glycosylated (N-linked (GlcNAc...) asparagine). The Charge relay system role is filled by Asp-112. The Charge relay system role is filled by Ser-208.

Belongs to the peptidase S1 family. Snake venom subfamily. As to quaternary structure, monomer. Expressed by the venom gland.

Its subcellular location is the secreted. In terms of biological role, thrombin-like snake venom serine protease. Displays a specificity similar to trypsin. Releases only fibrinopeptide A in the conversion of fibrinogen to fibrin. Reversibly increases the permeability of the blood brain barrier (BBB) in mice. Induces the barrel rotation syndrome in mice, which is manifested by gyroxin-like, rapid rolling motions. This syndrome may be due to its effect on BBB permeability, and certainly also to other actions affecting endogenous substrates present in the endothelium, nervous tissues or blood. Also shows a moderate inhibitory activity on the human voltage-gated potassium channel Kv10.1/KCNH1/EAG1 (58% current inhibition at 5 uM). It blocks Kv10.1/KCNH1/EAG1 in a time and dose-dependent manner and with a mechanism independent of its enzymatic activity. It may have a preference in interacting with Kv10.1/KCNH1/EAG1 in its closed state, since the inhibitory effect of the toxin is decreased at more depolarized potentials. This chain is Thrombin-like enzyme gyroxin B1.3, found in Crotalus durissus terrificus (South American rattlesnake).